Consider the following 289-residue polypeptide: Glycine--tRNA ligase alpha subunit (289 aa).

The protein belongs to the class-II aminoacyl-tRNA synthetase family. As to quaternary structure, tetramer of two alpha and two beta subunits.

It is found in the cytoplasm. It carries out the reaction tRNA(Gly) + glycine + ATP = glycyl-tRNA(Gly) + AMP + diphosphate. The sequence is that of Glycine--tRNA ligase alpha subunit from Rickettsia felis (strain ATCC VR-1525 / URRWXCal2) (Rickettsia azadi).